A 201-amino-acid polypeptide reads, in one-letter code: MALHDENVVWHSHPVTVAAREQLHGHRGVVLWFTGLSGSGKSTVAGALEEALHQRGVSTYLLDGDNVRHGLCRDLGFSDADRQENIRRVGEVASLMADAGLIVLTAFISPHRAERQLVKERVGHDRFIEIYVNTPLAICEQRDPKGLYKKARAGELRNFTGIDAIYEAPDSPQVHLNGEQLVTNLVSQLLDLLRRRDIIRS.

An ATP-binding site is contributed by 35–42; sequence GLSGSGKS. Catalysis depends on Ser109, which acts as the Phosphoserine intermediate.

Belongs to the APS kinase family.

The catalysed reaction is adenosine 5'-phosphosulfate + ATP = 3'-phosphoadenylyl sulfate + ADP + H(+). Its pathway is sulfur metabolism; hydrogen sulfide biosynthesis; sulfite from sulfate: step 2/3. Catalyzes the synthesis of activated sulfate. The sequence is that of Adenylyl-sulfate kinase from Salmonella typhi.